We begin with the raw amino-acid sequence, 546 residues long: Amidophosphoribosyltransferase (546 aa).

Over residues 1–26 (MSAPQQQQQSQQKQQQHVRVVEQQQV) the composition is skewed to low complexity. Residues 1-39 (MSAPQQQQQSQQKQQQHVRVVEQQQVEPAEAVTSSMESE) form a disordered region. A propeptide spanning residues 1-53 (MSAPQQQQQSQQKQQQHVRVVEQQQVEPAEAVTSSMESESISASKELTGLTHE) is cleaved from the precursor. Catalysis depends on C54, which acts as the Nucleophile. The Glutamine amidotransferase type-2 domain maps to 54–302 (CGVFGAIACG…PGEIVELSRS (249 aa)). S113 carries the phosphoserine modification. T114 carries the phosphothreonine modification. S120 is subject to Phosphoserine. C321 is a binding site for [4Fe-4S] cluster. Mg(2+)-binding residues include S368, D430, and D431. Residues C467, C528, and C531 each contribute to the [4Fe-4S] cluster site.

In the C-terminal section; belongs to the purine/pyrimidine phosphoribosyltransferase family. Requires Mg(2+) as cofactor. The cofactor is [4Fe-4S] cluster.

The catalysed reaction is 5-phospho-beta-D-ribosylamine + L-glutamate + diphosphate = 5-phospho-alpha-D-ribose 1-diphosphate + L-glutamine + H2O. Its pathway is purine metabolism; IMP biosynthesis via de novo pathway; N(1)-(5-phospho-D-ribosyl)glycinamide from 5-phospho-alpha-D-ribose 1-diphosphate: step 1/2. Functionally, involved in the first step (and regulatory point) of the de novo biosynthesis of purine nucleotides, where it catalyzes the transfer of glutamine amide to 5-phospho-alpha-D-ribose 1-diphosphate. This is Amidophosphoribosyltransferase (Prat) from Drosophila melanogaster (Fruit fly).